The following is a 305-amino-acid chain: C alpha-dehydrogenase (305 aa).

10–34 (FITGGASGAGFGQAKVFGQAGAKIV) provides a ligand contact to NAD(+). Ser144 contacts substrate. Catalysis depends on Tyr157, which acts as the Proton acceptor.

It belongs to the short-chain dehydrogenases/reductases (SDR) family.

It participates in secondary metabolite metabolism; lignin degradation. In terms of biological role, catalyzes the C alpha dehydrogenation of arylglycerol-beta-aryl ether (C alpha alcohol type) (compound IV). The polypeptide is C alpha-dehydrogenase (ligD) (Sphingobium sp. (strain NBRC 103272 / SYK-6)).